The primary structure comprises 146 residues: Large ribosomal subunit protein uL15 (146 aa).

The disordered stretch occupies residues 1 to 56; that stretch reads MGLRLNELSPGVGAKKTAQRRGRGIGSGLGKTGGRGVKGQKSRSGSSVRSGFEGGQ. Over residues 24–37 the composition is skewed to gly residues; it reads GIGSGLGKTGGRGV.

The protein belongs to the universal ribosomal protein uL15 family. Part of the 50S ribosomal subunit.

In terms of biological role, binds to the 23S rRNA. This chain is Large ribosomal subunit protein uL15, found in Psychrobacter arcticus (strain DSM 17307 / VKM B-2377 / 273-4).